We begin with the raw amino-acid sequence, 196 residues long: ATP-dependent Clp protease proteolytic subunit 1 (196 aa).

The Nucleophile role is filled by Ser-96. Residue His-121 is part of the active site.

It belongs to the peptidase S14 family. As to quaternary structure, fourteen ClpP subunits assemble into 2 heptameric rings which stack back to back to give a disk-like structure with a central cavity, resembling the structure of eukaryotic proteasomes.

The protein resides in the cytoplasm. It catalyses the reaction Hydrolysis of proteins to small peptides in the presence of ATP and magnesium. alpha-casein is the usual test substrate. In the absence of ATP, only oligopeptides shorter than five residues are hydrolyzed (such as succinyl-Leu-Tyr-|-NHMec, and Leu-Tyr-Leu-|-Tyr-Trp, in which cleavage of the -Tyr-|-Leu- and -Tyr-|-Trp bonds also occurs).. In terms of biological role, cleaves peptides in various proteins in a process that requires ATP hydrolysis. Has a chymotrypsin-like activity. Plays a major role in the degradation of misfolded proteins. The protein is ATP-dependent Clp protease proteolytic subunit 1 of Prochlorococcus marinus (strain SARG / CCMP1375 / SS120).